Here is a 186-residue protein sequence, read N- to C-terminus: Threonylcarbamoyl-AMP synthase (186 aa).

In terms of domain architecture, YrdC-like spans 2 to 186; it reads VSNLQQVVKA…ARTEQLLRQG (185 aa).

It belongs to the SUA5 family. TsaC subfamily.

The protein resides in the cytoplasm. It catalyses the reaction L-threonine + hydrogencarbonate + ATP = L-threonylcarbamoyladenylate + diphosphate + H2O. In terms of biological role, required for the formation of a threonylcarbamoyl group on adenosine at position 37 (t(6)A37) in tRNAs that read codons beginning with adenine. Catalyzes the conversion of L-threonine, HCO(3)(-)/CO(2) and ATP to give threonylcarbamoyl-AMP (TC-AMP) as the acyladenylate intermediate, with the release of diphosphate. The protein is Threonylcarbamoyl-AMP synthase of Vibrio vulnificus (strain CMCP6).